A 975-amino-acid chain; its full sequence is Probable outer membrane protein PmpA (975 aa).

A signal peptide spans 1–51; the sequence is MNRVIEIHAHYDQRQLSQSPNTNFLVHHPYLTLIPKFLLGALIVYAPYSFA. Residues 699 to 975 enclose the Autotransporter domain; it reads RSLIPTSYFG…SLSCGGYVGF (277 aa).

Belongs to the PMP outer membrane protein family.

Its subcellular location is the secreted. It is found in the cell wall. It localises to the cell outer membrane. This chain is Probable outer membrane protein PmpA (pmpA), found in Chlamydia trachomatis serovar D (strain ATCC VR-885 / DSM 19411 / UW-3/Cx).